We begin with the raw amino-acid sequence, 208 residues long: MGYCSGRCTLIFICGMQLVCVLERQIFDFLGYQWAPILANFVHIIIVILGLFGTIQYRPRYVTGYAVWLVLWVTWNVFVICFYLEAGDLSKETDLILTFNISMHRSWWMENGPGCMVTSVTPAPDWAPEDHRYITVSGCFLDYQYIEVAHSSLQIVLALAGFIYACYVVRCITEEEDSFDFIGGFDSYGYQGPQKTSHLQLQPMYMSK.

A run of 4 helical transmembrane segments spans residues 1–23 (MGYCSGRCTLIFICGMQLVCVLE), 35–55 (APILANFVHIIIVILGLFGTI), 64–84 (GYAVWLVLWVTWNVFVICFYL), and 148–168 (VAHSSLQIVLALAGFIYACYV).

The protein belongs to the NKAIN family. As to quaternary structure, interacts with ATP1B1. In terms of tissue distribution, detected in the brain only and specifically in neurons; expressed in multiple regions such as cerebral cortex, thalamus, cerebellum, olfactory bulb and brainstem, but not in the hippocampus.

Its subcellular location is the cell membrane. In Mus musculus (Mouse), this protein is Sodium/potassium-transporting ATPase subunit beta-1-interacting protein 2 (Nkain2).